A 928-amino-acid chain; its full sequence is DENN domain-containing protein 2C (928 aa).

Disordered stretches follow at residues 67–105 (KSKN…YDDT) and 245–266 (QSSL…IRGR). Over residues 85–105 (ENTKSHDQSENENKKHEYDDT) the composition is skewed to basic and acidic residues. S271 carries the post-translational modification Phosphoserine. The segment at 428–456 (KLHSYTGKELPPTKGETSGNESDAEYLPK) is disordered. One can recognise a uDENN domain in the interval 492-641 (ELFVVVSLQK…PFPAPGRTIT (150 aa)). One can recognise a cDENN domain in the interval 663–796 (RLEHVDFKCL…LQAALMQILE (134 aa)). Positions 798–888 (RNEILTQEQN…QDRELRKSGV (91 aa)) constitute a dDENN domain.

In terms of biological role, guanine nucleotide exchange factor (GEF) which may activate RAB9A and RAB9B. Promotes the exchange of GDP to GTP, converting inactive GDP-bound Rab proteins into their active GTP-bound form. The polypeptide is DENN domain-containing protein 2C (DENND2C) (Homo sapiens (Human)).